The sequence spans 629 residues: tRNA uridine 5-carboxymethylaminomethyl modification enzyme MnmG (629 aa).

FAD contacts are provided by residues 13–18 (GGGHAG), V125, and S180. 273–287 (GPRYCPSIEDKVMRF) contacts NAD(+). FAD is bound at residue Q370.

The protein belongs to the MnmG family. As to quaternary structure, homodimer. Heterotetramer of two MnmE and two MnmG subunits. The cofactor is FAD.

It is found in the cytoplasm. In terms of biological role, NAD-binding protein involved in the addition of a carboxymethylaminomethyl (cmnm) group at the wobble position (U34) of certain tRNAs, forming tRNA-cmnm(5)s(2)U34. This chain is tRNA uridine 5-carboxymethylaminomethyl modification enzyme MnmG, found in Psychromonas ingrahamii (strain DSM 17664 / CCUG 51855 / 37).